A 537-amino-acid chain; its full sequence is Putative cysteine ligase BshC (537 aa).

Residues 383–451 (MERTQKLLKQ…EVKENQDNFN (69 aa)) adopt a coiled-coil conformation.

Belongs to the BshC family.

Functionally, involved in bacillithiol (BSH) biosynthesis. May catalyze the last step of the pathway, the addition of cysteine to glucosamine malate (GlcN-Mal) to generate BSH. This chain is Putative cysteine ligase BshC, found in Staphylococcus haemolyticus (strain JCSC1435).